The chain runs to 160 residues: uncharacterized protein (160 aa).

A helical membrane pass occupies residues 137-157; the sequence is YNILFVVVILLLLFVAWRCYV.

The protein localises to the host membrane. It localises to the virion. This is an uncharacterized protein from Acanthamoeba polyphaga mimivirus (APMV).